The chain runs to 513 residues: ATP synthase subunit alpha (513 aa).

An ATP-binding site is contributed by 169–176 (GDRQTGKT).

This sequence belongs to the ATPase alpha/beta chains family. As to quaternary structure, F-type ATPases have 2 components, CF(1) - the catalytic core - and CF(0) - the membrane proton channel. CF(1) has five subunits: alpha(3), beta(3), gamma(1), delta(1), epsilon(1). CF(0) has three main subunits: a(1), b(2) and c(9-12). The alpha and beta chains form an alternating ring which encloses part of the gamma chain. CF(1) is attached to CF(0) by a central stalk formed by the gamma and epsilon chains, while a peripheral stalk is formed by the delta and b chains.

It localises to the cell inner membrane. The enzyme catalyses ATP + H2O + 4 H(+)(in) = ADP + phosphate + 5 H(+)(out). Functionally, produces ATP from ADP in the presence of a proton gradient across the membrane. The alpha chain is a regulatory subunit. The protein is ATP synthase subunit alpha of Thiobacillus denitrificans (strain ATCC 25259 / T1).